Consider the following 373-residue polypeptide: Secondary metabolism regulator laeA (373 aa).

The segment at 55–81 (ERDPAAGRWHANGSPSINSTSSKNPDR) is disordered. Residues 67 to 77 (GSPSINSTSSK) are compositionally biased toward polar residues.

The protein belongs to the methyltransferase superfamily. LaeA methyltransferase family. As to quaternary structure, component of the heterotrimeric velvet complex composed of laeA, veA and velB; VeA acting as a bridging protein between laeA and velB.

Its subcellular location is the nucleus. The catalysed reaction is L-methionyl-[protein] + S-adenosyl-L-methionine = S-methyl-L-methionyl-[protein] + S-adenosyl-L-homocysteine. Functionally, methyltransferase that performs automethylation. No other methyl-accepting substrate has been identified yet. Component of the velvet transcription factor complex that acts as a global regulator for secondary metabolite gene expression. Positively controls expression of 20% to 40% of major classes of secondary metabolite biosynthesis genes such as nonribosomal peptide synthetases, polyketide synthases, and P450 monooxygenases. Controls the expression of the gliotoxin gene cluster. Controls the expression of the fumitremorgin, fumagillin, and pseurotin gene clusters, where genes for fumagillin and pseurotin are physically intertwined in a single supercluster. Regulates the biosynthetic genes required for endocrocin production. Secondary metabolites under the transcriptional regulation of laeA are necessary for inhibition of angiogenesis during invasive infection in mice. Controls the expression of cell surface rodA, a hydrophobin that acts as an antiphagocytic molecule. Also regulates the expression of genes involved in conidial biosynthesis. The chain is Secondary metabolism regulator laeA from Aspergillus fumigatus (strain ATCC MYA-4609 / CBS 101355 / FGSC A1100 / Af293) (Neosartorya fumigata).